Consider the following 237-residue polypeptide: Ribonuclease PH (237 aa).

Residues arginine 86 and 124-126 (GTR) each bind phosphate.

The protein belongs to the RNase PH family. Homohexameric ring arranged as a trimer of dimers.

It catalyses the reaction tRNA(n+1) + phosphate = tRNA(n) + a ribonucleoside 5'-diphosphate. In terms of biological role, phosphorolytic 3'-5' exoribonuclease that plays an important role in tRNA 3'-end maturation. Removes nucleotide residues following the 3'-CCA terminus of tRNAs; can also add nucleotides to the ends of RNA molecules by using nucleoside diphosphates as substrates, but this may not be physiologically important. Probably plays a role in initiation of 16S rRNA degradation (leading to ribosome degradation) during starvation. This Methylorubrum extorquens (strain PA1) (Methylobacterium extorquens) protein is Ribonuclease PH.